The following is a 198-amino-acid chain: MKVTKADIVISAVKPEQYPDSDLPEIALAGRSNVGKSSFINKILNRKKLVRISSKPGKTQTLNFFLINEMMHFVDVPGYGYAKVSKTERAAWGRMIETYFTTRTQLDAAVLVVDLRHQPTKDDIMMYDFLKHYEIPTIIIATKADKIPKGKWQKHLKVVKETLAVEIGDEIVLFSSETGLGKEEAWKAIHKMTKTKNA.

Residues 22-195 (DLPEIALAGR…WKAIHKMTKT (174 aa)) form the EngB-type G domain. GTP is bound by residues 30–37 (GRSNVGKS), 57–61 (GKTQT), 75–78 (DVPG), 142–145 (TKAD), and 174–176 (FSS). Residues Ser37 and Thr59 each contribute to the Mg(2+) site.

Belongs to the TRAFAC class TrmE-Era-EngA-EngB-Septin-like GTPase superfamily. EngB GTPase family. It depends on Mg(2+) as a cofactor.

Functionally, necessary for normal cell division and for the maintenance of normal septation. This is Probable GTP-binding protein EngB from Bacillus mycoides (strain KBAB4) (Bacillus weihenstephanensis).